The following is a 427-amino-acid chain: Enolase 2 (427 aa).

Gln-165 is a (2R)-2-phosphoglycerate binding site. Catalysis depends on Glu-207, which acts as the Proton donor. The Mg(2+) site is built by Asp-244, Glu-287, and Asp-314. (2R)-2-phosphoglycerate contacts are provided by Lys-339, Arg-368, Ser-369, and Lys-390. The active-site Proton acceptor is the Lys-339.

The protein belongs to the enolase family. Component of the RNA degradosome, a multiprotein complex involved in RNA processing and mRNA degradation. The cofactor is Mg(2+).

Its subcellular location is the cytoplasm. It is found in the secreted. It localises to the cell surface. The enzyme catalyses (2R)-2-phosphoglycerate = phosphoenolpyruvate + H2O. It participates in carbohydrate degradation; glycolysis; pyruvate from D-glyceraldehyde 3-phosphate: step 4/5. In terms of biological role, catalyzes the reversible conversion of 2-phosphoglycerate (2-PG) into phosphoenolpyruvate (PEP). It is essential for the degradation of carbohydrates via glycolysis. The sequence is that of Enolase 2 from Pseudomonas syringae pv. syringae (strain B728a).